We begin with the raw amino-acid sequence, 1141 residues long: Serine-aspartate repeat-containing protein E (1141 aa).

The signal sequence occupies residues 1–52 (MINRDNKKAITKKGMISNRLNKFSIRKYTVGTASILVGTTLIFGLGNQEAKA). Positions 23 to 34 (FSIRKYTVGTAS) match the YSIRK-G/S signaling motif motif. The tract at residues 53–601 (AENTSTENAK…GDGTVKPEEK (549 aa)) is ligand binding A region. Residues 54–225 (ENTSTENAKQ…SKEELKNNPE (172 aa)) are disordered. Positions 61–75 (AKQDDATTSDNKEVV) are enriched in basic and acidic residues. The segment covering 77-90 (EAENNSTTENDSTN) has biased composition (low complexity). Residues 92–109 (IKKETNTDSQPEAKEEST) show a composition bias toward basic and acidic residues. Over residues 110–126 (KSSTQQQQNNVTATTET) the composition is skewed to low complexity. The segment covering 130–145 (NIEKENVKPSTDKTAT) has biased composition (basic and acidic residues). Positions 158–207 (PNNTNNDVTTKPSTSEIQTKPTTPQESTNIENSQPQPTPSKVDNQVTDAT) are enriched in polar residues. Basic and acidic residues predominate over residues 216-225 (SKEELKNNPE). 3 CNA-B domains span residues 602–714 (LYKI…YKEP), 715–824 (KYNL…YKTP), and 825–935 (KYSL…EEDT). Positions 899 to 1117 (VTNTTEDDKD…GSENNGSNNA (219 aa)) are disordered. Composition is skewed to acidic residues over residues 903–913 (TEDDKDADGGE) and 930–1080 (YFEE…DSDS). The LPXTG sorting signal signature appears at 1104–1108 (LPETG). At Thr1107 the chain carries Pentaglycyl murein peptidoglycan amidated threonine. The propeptide at 1108–1141 (GSENNGSNNATLFGGLFAALGSLLLFGRRKKQNK) is removed by sortase.

It belongs to the serine-aspartate repeat-containing protein (SDr) family. In terms of assembly, interacts with host complement factor H/CFAH (via C-terminus). Interacts with host complement regulator C4BPA.

It localises to the secreted. It is found in the cell wall. Its function is as follows. Cell surface-associated calcium-binding protein which plays an important role in adhesion and pathogenesis. Contributes to the resistance to killing by innate immune components in blood and thus attenuates bacterial clearance by interacting with host complement factor H/CFAH and modulating its activity. Also inhibits bacterial opsonization and killing by interacting with host complement regulator C4BPA and thus inhibiting classical complement pathway activation. The sequence is that of Serine-aspartate repeat-containing protein E (sdrE) from Staphylococcus aureus (strain MSSA476).